The primary structure comprises 242 residues: 6-phosphogluconolactonase (242 aa).

This sequence belongs to the glucosamine/galactosamine-6-phosphate isomerase family. 6-phosphogluconolactonase subfamily.

It carries out the reaction 6-phospho-D-glucono-1,5-lactone + H2O = 6-phospho-D-gluconate + H(+). The protein operates within carbohydrate degradation; pentose phosphate pathway; D-ribulose 5-phosphate from D-glucose 6-phosphate (oxidative stage): step 2/3. Hydrolysis of 6-phosphogluconolactone to 6-phosphogluconate. This Pseudomonas putida (Arthrobacter siderocapsulatus) protein is 6-phosphogluconolactonase (pgl).